A 644-amino-acid chain; its full sequence is Prolyl 3,4-dihydroxylase TPA1 (644 aa).

The region spanning 141 to 247 (SKTDMSINTY…RLSIQGWYHI (107 aa)) is the Fe2OG dioxygenase domain. Fe cation contacts are provided by H159 and D161. Y173 is a 2-oxoglutarate binding site. A Fe cation-binding site is contributed by H227. R238 lines the 2-oxoglutarate pocket. S607 bears the Phosphoserine mark.

Belongs to the TPA1 family. Monomer and homodimer. Interacts with FRK1, eRF1 (SUP1), eRF3 (SUP35) and polyadenylate-binding protein PAB1. Interacts with ETT1. Requires Fe(2+) as cofactor. L-ascorbate serves as cofactor.

It localises to the nucleus. It carries out the reaction [ribosomal protein uS12]-L-proline + 2-oxoglutarate + O2 = [ribosomal protein uS12]-(3S)-3-hydroxy-L-proline + succinate + CO2. It catalyses the reaction [ribosomal protein uS12]-(3S)-3-hydroxy-L-proline + 2-oxoglutarate + O2 = [ribosomal protein uS12]-(3S)-3,4-dihydroxy-L-proline + succinate + CO2. Prolyl 3,4-dihydroxylase that catalyzes 3,4-dihydroxylation of 'Pro-64' of small ribosomal subunit uS12 (RPS23A and RPS23B), thereby regulating protein translation termination efficiency. Part of a messenger ribonucleoprotein (mRNP) complex at the 3'-UTR of mRNAs. It associates specifically with components of the translation termination complex and is involved in both translation termination and in regulation of normal mRNA decay through translation termination-coupled poly(A) shortening. This chain is Prolyl 3,4-dihydroxylase TPA1, found in Saccharomyces cerevisiae (strain ATCC 204508 / S288c) (Baker's yeast).